We begin with the raw amino-acid sequence, 423 residues long: Riboflavin biosynthesis protein RibBA (423 aa).

Positions 1 to 204 are DHBP synthase; sequence MTRLDSVERA…IADLIEWRRK (204 aa). D-ribulose 5-phosphate contacts are provided by residues 28–29, D33, 141–145, and E165; these read RE and RPGHT. Mg(2+) is bound at residue E29. H144 serves as a coordination point for Mg(2+). Positions 205–423 are GTP cyclohydrolase II; sequence HEKHIARVAE…AVPGEFGGAV (219 aa). 259-263 provides a ligand contact to GTP; it reads RVHSE. Residues C264, C275, and C277 each contribute to the Zn(2+) site. GTP-binding positions include Q280, 303-305, and T325; that span reads EGR. Residue D337 is the Proton acceptor; for GTP cyclohydrolase activity of the active site. The active-site Nucleophile; for GTP cyclohydrolase activity is the R339. GTP is bound by residues T360 and K365.

In the N-terminal section; belongs to the DHBP synthase family. The protein in the C-terminal section; belongs to the GTP cyclohydrolase II family. Mg(2+) is required as a cofactor. Mn(2+) serves as cofactor. Requires Zn(2+) as cofactor.

It carries out the reaction D-ribulose 5-phosphate = (2S)-2-hydroxy-3-oxobutyl phosphate + formate + H(+). The enzyme catalyses GTP + 4 H2O = 2,5-diamino-6-hydroxy-4-(5-phosphoribosylamino)-pyrimidine + formate + 2 phosphate + 3 H(+). Its pathway is cofactor biosynthesis; riboflavin biosynthesis; 2-hydroxy-3-oxobutyl phosphate from D-ribulose 5-phosphate: step 1/1. It participates in cofactor biosynthesis; riboflavin biosynthesis; 5-amino-6-(D-ribitylamino)uracil from GTP: step 1/4. Its function is as follows. Catalyzes the conversion of D-ribulose 5-phosphate to formate and 3,4-dihydroxy-2-butanone 4-phosphate. Catalyzes the conversion of GTP to 2,5-diamino-6-ribosylamino-4(3H)-pyrimidinone 5'-phosphate (DARP), formate and pyrophosphate. In Mycolicibacterium gilvum (strain PYR-GCK) (Mycobacterium gilvum (strain PYR-GCK)), this protein is Riboflavin biosynthesis protein RibBA.